A 402-amino-acid chain; its full sequence is Zinc finger protein 322 (402 aa).

A C2H2-type 1; atypical zinc finger spans residues Tyr-43–His-65. 8 consecutive C2H2-type zinc fingers follow at residues Tyr-71–His-93, Tyr-99–His-121, Tyr-127–His-149, Tyr-155–His-177, Phe-183–His-205, Tyr-211–His-233, Tyr-239–His-261, and Tyr-267–His-289. The C2H2-type 10; degenerate zinc finger occupies Phe-293–His-315. The C2H2-type 11; degenerate zinc finger occupies Tyr-351–His-373. The residue at position 391 (Ser-391) is a Phosphoserine.

Belongs to the krueppel C2H2-type zinc-finger protein family. As to quaternary structure, interacts with POU5F1.

The protein localises to the cytoplasm. The protein resides in the nucleus. Functionally, transcriptional activator. Important for maintenance of pluripotency in embryonic stem cells. Binds directly to the POU5F1 distal enhancer and the NANOG proximal promoter, and enhances expression of both genes. Can also bind to numerous other gene promoters and regulates expression of many other pluripotency factors, either directly or indirectly. Promotes inhibition of MAPK signaling during embryonic stem cell differentiation. The chain is Zinc finger protein 322 (ZNF322) from Macaca fascicularis (Crab-eating macaque).